The primary structure comprises 66 residues: Large ribosomal subunit protein bL33c (66 aa).

It belongs to the bacterial ribosomal protein bL33 family.

Its subcellular location is the plastid. It is found in the chloroplast. In Calycanthus floridus var. glaucus (Eastern sweetshrub), this protein is Large ribosomal subunit protein bL33c.